An 879-amino-acid chain; its full sequence is DNA replication licensing factor mcm3 (879 aa).

The 208-residue stretch at 306–513 (VFELLSTSLA…KDRALSEHVL (208 aa)) folds into the MCM domain. 356 to 363 (GDPSTAKS) is a binding site for ATP. Residues 488-491 (SRFD) carry the Arginine finger motif. The segment at 679–778 (RKKHKKQRLE…STLPATSREL (100 aa)) is disordered. The span at 690–713 (GEEFDSEDDNSDDMDIEESEEEMD) shows a compositional bias: acidic residues. The span at 732 to 752 (TSQSQESGSEIGSSIAGTAGS) shows a compositional bias: low complexity. A compositionally biased stretch (polar residues) spans 754–778 (NVGTSNTQLSWPSTHSTLPATSREL).

Belongs to the MCM family. Component of the mcm2-7 complex. The complex forms a toroidal hexameric ring with the proposed subunit order mcm2-mcm6-mcm4-mcm7-mcm3-mcm5. The heterodimers of mcm4/mcm6 and mcm3/mcm5 interact with mcm2 and mcm7.

It localises to the nucleus. The catalysed reaction is ATP + H2O = ADP + phosphate + H(+). Acts as a component of the mcm2-7 complex (mcm complex) which is the putative replicative helicase essential for 'once per cell cycle' DNA replication initiation and elongation in eukaryotic cells. The active ATPase sites in the mcm2-7 ring are formed through the interaction surfaces of two neighboring subunits such that a critical structure of a conserved arginine finger motif is provided in trans relative to the ATP-binding site of the Walker A box of the adjacent subunit. The six ATPase active sites, however, are likely to contribute differentially to the complex helicase activity. The sequence is that of DNA replication licensing factor mcm3 (mcm3) from Schizosaccharomyces pombe (strain 972 / ATCC 24843) (Fission yeast).